A 280-amino-acid polypeptide reads, in one-letter code: Large ribosomal subunit protein uL2 (280 aa).

A disordered region spans residues 215 to 280; sequence GRRPHVRGSA…IQRANDKKEK (66 aa).

Belongs to the universal ribosomal protein uL2 family. As to quaternary structure, part of the 50S ribosomal subunit. Forms a bridge to the 30S subunit in the 70S ribosome.

Functionally, one of the primary rRNA binding proteins. Required for association of the 30S and 50S subunits to form the 70S ribosome, for tRNA binding and peptide bond formation. It has been suggested to have peptidyltransferase activity; this is somewhat controversial. Makes several contacts with the 16S rRNA in the 70S ribosome. The polypeptide is Large ribosomal subunit protein uL2 (Dictyoglomus thermophilum (strain ATCC 35947 / DSM 3960 / H-6-12)).